The sequence spans 307 residues: Chlorophyll a-b binding protein 1, chloroplastic (307 aa).

A chloroplast-targeting transit peptide spans 1-44 (MAPYSVVASVLAAAPPQQSGSVRQLPSTINRAITQRSQSRHVAS). Positions 34-54 (TQRSQSRHVASASSASSPTTM) are disordered. The chlorophyll a site is built by threonine 52, glutamate 63, isoleucine 64, glycine 65, tyrosine 68, leucine 81, proline 86, arginine 89, glycine 90, phenylalanine 91, and aspartate 92. Leucine 96 provides a ligand contact to loroxanthin. The helical transmembrane segment at 111–143 (NYDESRLRWLLEGELYNGRLAMLAVVGVLTVEA) threads the bilayer. Residues leucine 120, glutamate 124, asparagine 127, methionine 132, and lysine 146 each contribute to the chlorophyll a site. Tryptophan 149 provides a ligand contact to loroxanthin. Residues glutamate 151, tyrosine 163, histidine 171, glutamate 178, arginine 181, glutamate 190, arginine 198, and aspartate 200 each coordinate chlorophyll a. Residues 161–186 (TPYVVAVVGGHLAFALLEKKRLENFR) form a helical membrane-spanning segment. Positions 200 and 202 each coordinate all-trans-violaxanthin. Positions 204, 208, 214, 215, 218, 222, and 224 each coordinate chlorophyll a. The helical transmembrane segment at 213 to 238 (DYNRQAEVRNCRLAMLTFLGFSVQAW) threads the bilayer. Phenylalanine 230 lines the loroxanthin pocket. Position 233 (phenylalanine 233) interacts with all-trans-violaxanthin. A chlorophyll a-binding site is contributed by glutamine 236. Proline 244 is an all-trans-violaxanthin binding site. Chlorophyll a contacts are provided by asparagine 247, histidine 251, proline 255, phenylalanine 256, alanine 258, asparagine 259, isoleucine 260, and phenylalanine 274. Residues 265–289 (DRGTNVVAIFSAFAAVMHIAELARE) form a helical membrane-spanning segment.

It belongs to the light-harvesting chlorophyll a/b-binding (LHC) protein family. In terms of assembly, homooligomer. Component of a light-harvesting complex (LHC) consisting of 11 chlorophyll a-b binding proteins. Requires Binds 11 chlorophylls (Chl-a and Chl-b) and the 2 carotenoids violaxanthin and loroxanthin. as cofactor.

It is found in the plastid. The protein localises to the chloroplast thylakoid membrane. Its function is as follows. Component of a light-harvesting complex (LHC). The LHC functions as a light receptor, it captures and delivers excitation energy to photosystems with which it is closely associated. Functions in a far-red LHC by absorbing far-red light and promoting photosystem II (PSII) excitation, likely with entropy-driven uphill excitation energy transfer. Exhibits a typical absorption band at 671 nm (Qy band), as well as a large far-red absorption band at 706.5 together with fluorescence emission at around 713 nm (F713). The polypeptide is Chlorophyll a-b binding protein 1, chloroplastic (Prasiola crispa (Green alga)).